Reading from the N-terminus, the 932-residue chain is Protocadherin gamma-A7 (932 aa).

Positions 1–28 (MAAQPRGGDYRGFFLLSILLGTPWEAWA) are cleaved as a signal peptide. 6 consecutive Cadherin domains span residues 29–133 (GRIL…VPRF), 134–242 (LTEE…TPVF), 243–347 (SLPQ…APEV), 348–452 (TMTS…PPTF), 453–562 (PHSS…PPEI), and 570–682 (DGST…EPSD). The Extracellular segment spans residues 29–692 (GRILYSVSEE…GPYNYDLTLY (664 aa)). N-linked (GlcNAc...) asparagine glycosylation is found at Asn419 and Asn545. The helical transmembrane segment at 693 to 713 (LVVAVATVSCVFLAFVLVLLA) threads the bilayer. Over 714-932 (LRLRRWHKSR…KKKSGKKEKK (219 aa)) the chain is Cytoplasmic. Disordered regions lie at residues 805–841 (PSIQ…WPNN) and 902–932 (ATLT…KEKK). Positions 922–932 (NKKKSGKKEKK) are enriched in basic residues.

The protein localises to the cell membrane. In terms of biological role, potential calcium-dependent cell-adhesion protein. May be involved in the establishment and maintenance of specific neuronal connections in the brain. The sequence is that of Protocadherin gamma-A7 (PCDHGA7) from Homo sapiens (Human).